Here is a 153-residue protein sequence, read N- to C-terminus: Deoxyuridine 5'-triphosphate nucleotidohydrolase (153 aa).

Substrate contacts are provided by residues 71 to 73 (RSG), Asn84, 88 to 90 (LID), and Met98.

It belongs to the dUTPase family. It depends on Mg(2+) as a cofactor.

It catalyses the reaction dUTP + H2O = dUMP + diphosphate + H(+). The protein operates within pyrimidine metabolism; dUMP biosynthesis; dUMP from dCTP (dUTP route): step 2/2. Functionally, this enzyme is involved in nucleotide metabolism: it produces dUMP, the immediate precursor of thymidine nucleotides and it decreases the intracellular concentration of dUTP so that uracil cannot be incorporated into DNA. The sequence is that of Deoxyuridine 5'-triphosphate nucleotidohydrolase from Wigglesworthia glossinidia brevipalpis.